We begin with the raw amino-acid sequence, 492 residues long: Protein kinase US3 homolog (492 aa).

Residues 99 to 137 (ADLHESQRGQPSGATDSQASTLETESAPPSADSSSSAKL) are disordered. Polar residues predominate over residues 106 to 122 (RGQPSGATDSQASTLET). Over residues 124–135 (SAPPSADSSSSA) the composition is skewed to low complexity. The region spanning 147–446 (YRVIGTLPAG…ASELLALPLF (300 aa)) is the Protein kinase domain. ATP contacts are provided by residues 153–161 (LPAGSFGKI) and Lys187. Asp281 serves as the catalytic Proton acceptor.

It belongs to the protein kinase superfamily. Ser/Thr protein kinase family. Phosphorylated by UL13 homolog; this phosphorylation regulates subsequent phosphorylation of UL31 and UL34 homologs by US3. Autophosphorylated.

Its subcellular location is the host cytoplasm. The protein resides in the host nucleus. The catalysed reaction is L-seryl-[protein] + ATP = O-phospho-L-seryl-[protein] + ADP + H(+). It carries out the reaction L-threonyl-[protein] + ATP = O-phospho-L-threonyl-[protein] + ADP + H(+). Its function is as follows. Multifunctional serine/threonine kinase that plays a role in several processes including egress of virus particles from the nucleus, modulation of the actin cytoskeleton and inhibition of apoptosis. Phosphorylates UL31 and UL34 homologs, two critical regulators of capsid budding from nucleus to endoplasmic reticulum, thereby facilitating virion egress. Modulates and redistributes host components of the nuclear envelope, including LMNA, emerin/EMD and the nuclear matrix protein MATR3. Phosphorylates envelope glycoprotein B (gB), probably to direct it to the cell surface. Promotes virus intracellular spread by restructuring host cell cytoskeleton. Blocks host apoptosis to extend cell survival and allow efficient viral replication. Promotes viral gene expression by phosphorylating host HDAC2 to reduce viral genome silencing. The chain is Protein kinase US3 homolog (US3) from Amazona oratrix (yellow-headed parrot).